A 186-amino-acid polypeptide reads, in one-letter code: Probable GTP-binding protein EngB (186 aa).

The region spanning 18–186 is the EngB-type G domain; the sequence is DKKEICFIGR…LKKLIGSVIL (169 aa). GTP is bound by residues 26–33, 52–56, 69–72, 135–138, and 166–168; these read GRSNVGKS, GRTQL, DLPG, NKAD, and VSA. Mg(2+) contacts are provided by Ser33 and Thr54.

This sequence belongs to the TRAFAC class TrmE-Era-EngA-EngB-Septin-like GTPase superfamily. EngB GTPase family. Mg(2+) is required as a cofactor.

Functionally, necessary for normal cell division and for the maintenance of normal septation. This Malacoplasma penetrans (strain HF-2) (Mycoplasma penetrans) protein is Probable GTP-binding protein EngB.